A 226-amino-acid polypeptide reads, in one-letter code: 2-C-methyl-D-erythritol 4-phosphate cytidylyltransferase (226 aa).

It belongs to the IspD/TarI cytidylyltransferase family. IspD subfamily.

The enzyme catalyses 2-C-methyl-D-erythritol 4-phosphate + CTP + H(+) = 4-CDP-2-C-methyl-D-erythritol + diphosphate. It participates in isoprenoid biosynthesis; isopentenyl diphosphate biosynthesis via DXP pathway; isopentenyl diphosphate from 1-deoxy-D-xylulose 5-phosphate: step 2/6. Functionally, catalyzes the formation of 4-diphosphocytidyl-2-C-methyl-D-erythritol from CTP and 2-C-methyl-D-erythritol 4-phosphate (MEP). The sequence is that of 2-C-methyl-D-erythritol 4-phosphate cytidylyltransferase from Actinobacillus pleuropneumoniae serotype 7 (strain AP76).